A 965-amino-acid polypeptide reads, in one-letter code: UvrABC system protein A (965 aa).

32–39 (GLSGSGKS) is a binding site for ATP. A C4-type zinc finger spans residues 254 to 281 (CPVCDYSLPELEPRLFSFNAPMGACPAC). 2 ABC transporter domains span residues 311-588 (WDRR…PRSL) and 608-937 (PNAT…HFLA). Position 641–648 (641–648 (GVSGSGKS)) interacts with ATP. The segment at 740 to 766 (CEACEGDGLIKVEMHFLPDVYVPCDVC) adopts a C4-type zinc-finger fold.

The protein belongs to the ABC transporter superfamily. UvrA family. As to quaternary structure, forms a heterotetramer with UvrB during the search for lesions.

Its subcellular location is the cytoplasm. In terms of biological role, the UvrABC repair system catalyzes the recognition and processing of DNA lesions. UvrA is an ATPase and a DNA-binding protein. A damage recognition complex composed of 2 UvrA and 2 UvrB subunits scans DNA for abnormalities. When the presence of a lesion has been verified by UvrB, the UvrA molecules dissociate. The chain is UvrABC system protein A from Xylella fastidiosa (strain 9a5c).